The sequence spans 486 residues: Ribulose bisphosphate carboxylase large chain (486 aa).

Substrate-binding residues include N126 and T176. The active-site Proton acceptor is the K178. K180 lines the substrate pocket. Positions 204, 206, and 207 each coordinate Mg(2+). K204 carries the post-translational modification N6-carboxylysine. H296 functions as the Proton acceptor in the catalytic mechanism. 3 residues coordinate substrate: R297, H329, and S381.

The protein belongs to the RuBisCO large chain family. Type I subfamily. As to quaternary structure, heterohexadecamer of 8 large chains and 8 small chains. Requires Mg(2+) as cofactor.

It catalyses the reaction 2 (2R)-3-phosphoglycerate + 2 H(+) = D-ribulose 1,5-bisphosphate + CO2 + H2O. The catalysed reaction is D-ribulose 1,5-bisphosphate + O2 = 2-phosphoglycolate + (2R)-3-phosphoglycerate + 2 H(+). In terms of biological role, ruBisCO catalyzes two reactions: the carboxylation of D-ribulose 1,5-bisphosphate, the primary event in carbon dioxide fixation, as well as the oxidative fragmentation of the pentose substrate. Both reactions occur simultaneously and in competition at the same active site. This is Ribulose bisphosphate carboxylase large chain from Sinorhizobium medicae (strain WSM419) (Ensifer medicae).